The chain runs to 358 residues: Gentisate 1,2-dioxygenase (358 aa).

In terms of domain architecture, Cupin type-1 spans 239–358; the sequence is QTLRQRAEND…AFNFYAEAEP (120 aa).

It belongs to the gentisate 1,2-dioxygenase family. As to quaternary structure, homotetramer.

It carries out the reaction 2,5-dihydroxybenzoate + O2 = 3-maleylpyruvate + H(+). It participates in aromatic compound metabolism; naphthalene degradation. Inhibited by 2,2'-dipyridyl. Functionally, catalyzes the oxygen-dependent ring fission of gentisate between the carboxyl and proximal hydroxyl groups at positions 1 and 2 of the aromatic ring to form maleylpyruvate. No activity with cathechol and protecatechuate as substrates. Part of a 3-hydroxybenzoic acid-degradation pathway. This is Gentisate 1,2-dioxygenase (gdoA) from Haloferax sp.